Consider the following 608-residue polypeptide: NADH-quinone oxidoreductase subunit C/D (608 aa).

The interval 1-199 (MSAASSLAPQ…EPFHLSTEKE (199 aa)) is NADH dehydrogenase I subunit C. The tract at residues 223–608 (DFMFLNLGPN…IDFVMADVDR (386 aa)) is NADH dehydrogenase I subunit D.

This sequence in the N-terminal section; belongs to the complex I 30 kDa subunit family. In the C-terminal section; belongs to the complex I 49 kDa subunit family. NDH-1 is composed of 13 different subunits. Subunits NuoB, CD, E, F, and G constitute the peripheral sector of the complex.

Its subcellular location is the cell inner membrane. It catalyses the reaction a quinone + NADH + 5 H(+)(in) = a quinol + NAD(+) + 4 H(+)(out). In terms of biological role, NDH-1 shuttles electrons from NADH, via FMN and iron-sulfur (Fe-S) centers, to quinones in the respiratory chain. The immediate electron acceptor for the enzyme in this species is believed to be ubiquinone. Couples the redox reaction to proton translocation (for every two electrons transferred, four hydrogen ions are translocated across the cytoplasmic membrane), and thus conserves the redox energy in a proton gradient. In Nitrosospira multiformis (strain ATCC 25196 / NCIMB 11849 / C 71), this protein is NADH-quinone oxidoreductase subunit C/D.